Here is a 173-residue protein sequence, read N- to C-terminus: Transcription factor E (173 aa).

An HTH TFE/IIEalpha-type domain is found at 9-92 (NNPATRAYIH…LWQLRIDLLY (84 aa)).

It belongs to the TFE family. Monomer. Interaction with RNA polymerase subunits RpoF and RpoE is necessary for Tfe stimulatory transcription activity. Able to interact with Tbp and RNA polymerase in the absence of DNA promoter. Interacts both with the preinitiation and elongation complexes.

Functionally, transcription factor that plays a role in the activation of archaeal genes transcribed by RNA polymerase. Facilitates transcription initiation by enhancing TATA-box recognition by TATA-box-binding protein (Tbp), and transcription factor B (Tfb) and RNA polymerase recruitment. Not absolutely required for transcription in vitro, but particularly important in cases where Tbp or Tfb function is not optimal. It dynamically alters the nucleic acid-binding properties of RNA polymerases by stabilizing the initiation complex and destabilizing elongation complexes. Seems to translocate with the RNA polymerase following initiation and acts by binding to the non template strand of the transcription bubble in elongation complexes. This chain is Transcription factor E, found in Methanoregula boonei (strain DSM 21154 / JCM 14090 / 6A8).